A 321-amino-acid polypeptide reads, in one-letter code: Glycerol-3-phosphate dehydrogenase [NAD(P)+] (321 aa).

Positions 10, 11, 31, 32, 47, and 98 each coordinate NADPH. Residues Lys-98, Gly-125, and Ser-127 each coordinate sn-glycerol 3-phosphate. Ala-129 is an NADPH binding site. 5 residues coordinate sn-glycerol 3-phosphate: Lys-177, Asp-230, Ser-240, Arg-241, and Asn-242. Lys-177 functions as the Proton acceptor in the catalytic mechanism. Position 241 (Arg-241) interacts with NADPH. NADPH is bound by residues Val-265 and Glu-267.

This sequence belongs to the NAD-dependent glycerol-3-phosphate dehydrogenase family.

The protein resides in the cytoplasm. It carries out the reaction sn-glycerol 3-phosphate + NAD(+) = dihydroxyacetone phosphate + NADH + H(+). The catalysed reaction is sn-glycerol 3-phosphate + NADP(+) = dihydroxyacetone phosphate + NADPH + H(+). The protein operates within membrane lipid metabolism; glycerophospholipid metabolism. Catalyzes the reduction of the glycolytic intermediate dihydroxyacetone phosphate (DHAP) to sn-glycerol 3-phosphate (G3P), the key precursor for phospholipid synthesis. This Thermotoga sp. (strain RQ2) protein is Glycerol-3-phosphate dehydrogenase [NAD(P)+].